Here is a 170-residue protein sequence, read N- to C-terminus: Cathelicidin antimicrobial peptide (170 aa).

Positions 1 to 30 are cleaved as a signal peptide; that stretch reads MKTQRDGPSLGRWSLVLLLLGLTMPLAITA. A propeptide spans 31-131 (cathelin-like domain (CLD)); that stretch reads QVLSYQEAVL…DISCDKDERK (101 aa). 2 disulfide bridges follow: cysteine 86/cysteine 97 and cysteine 108/cysteine 125. The tract at residues 150–162 is active core; the sequence is FKKIGQKINDFLG.

This sequence belongs to the cathelicidin family. Monomer, homodimer or homotrimer (in vitro). Oligomerizes as tetra- or hexamer in solution (in vitro). Proteolytically cleaved by proteinase PRTN3 into antibacterial peptide LL-37. Proteolytically cleaved by cathepsin CTSG and neutrophil elastase ELANE. Post-translationally, resistant to proteolytic degradation in solution, and when bound to both zwitterionic (mimicking mammalian membranes) and negatively charged membranes (mimicking bacterial membranes). In terms of processing, after secretion onto the skin surface, the CAMP gene product is processed by a serine protease-dependent mechanism into multiple novel antimicrobial peptides distinct from and shorter than cathelicidin LL-37. These peptides show enhanced antimicrobial action, acquiring the ability to kill skin pathogens such as S.aureus, E.coli and C.albicans. These peptides have lost the ability to stimulate CXCL8/IL8 release from keratinocytes. The peptides act synergistically, killing bacteria at lower concentrations when present together, and maintain activity at increased salt condition.

Its subcellular location is the secreted. The protein resides in the vesicle. In terms of biological role, antimicrobial protein that is an integral component of the innate immune system. Binds to bacterial lipopolysaccharides (LPS). Acts via neutrophil N-formyl peptide receptors to enhance the release of CXCL2. Postsecretory processing generates multiple cathelicidin antimicrobial peptides with various lengths which act as a topical antimicrobial defense in sweat on skin. The unprocessed precursor form, cathelicidin antimicrobial peptide, inhibits the growth of Gram-negative E.coli and E.aerogenes with efficiencies comparable to that of the mature peptide LL-37 (in vitro). Functionally, antimicrobial peptide that is an integral component of the innate immune system. Binds to bacterial lipopolysaccharides (LPS). Causes membrane permeabilization by forming transmembrane pores (in vitro). Causes lysis of E.coli. Exhibits antimicrobial activity against Gram-negative bacteria such as P.aeruginosa, S.typhimurium, E.aerogenes, E.coli and P.syringae, Gram-positive bacteria such as L.monocytogenes, S.epidermidis, S.pyogenes and S.aureus, as well as vancomycin-resistant enterococci (in vitro). Exhibits antimicrobial activity against methicillin-resistant S.aureus, P.mirabilis, and C.albicans in low-salt media, but not in media containing 100 mM NaCl (in vitro). Forms chiral supramolecular assemblies with quinolone signal (PQS) molecules of P.aeruginosa, which may lead to interference of bacterial quorum signaling and perturbance of bacterial biofilm formation. May form supramolecular fiber-like assemblies on bacterial membranes. Induces cytokine and chemokine producation as well as TNF/TNFA and CSF2/GMCSF production in normal human keratinocytes. Exhibits hemolytic activity against red blood cells. Exhibits antimicrobial activity against E.coli and B.megaterium (in vitro). The sequence is that of Cathelicidin antimicrobial peptide from Cebus capucinus (White-faced sapajou).